Here is a 535-residue protein sequence, read N- to C-terminus: T-complex protein 1 subunit zeta 2 (535 aa).

Belongs to the TCP-1 chaperonin family. As to quaternary structure, heterooligomeric complex of about 850 to 900 kDa that forms two stacked rings, 12 to 16 nm in diameter.

It localises to the cytoplasm. Its function is as follows. Molecular chaperone; assists the folding of proteins upon ATP hydrolysis. Known to play a role, in vitro, in the folding of actin and tubulin. This is T-complex protein 1 subunit zeta 2 from Arabidopsis thaliana (Mouse-ear cress).